We begin with the raw amino-acid sequence, 122 residues long: Large ribosomal subunit protein bL12 (122 aa).

Belongs to the bacterial ribosomal protein bL12 family. As to quaternary structure, homodimer. Part of the ribosomal stalk of the 50S ribosomal subunit. Forms a multimeric L10(L12)X complex, where L10 forms an elongated spine to which 2 to 4 L12 dimers bind in a sequential fashion. Binds GTP-bound translation factors.

In terms of biological role, forms part of the ribosomal stalk which helps the ribosome interact with GTP-bound translation factors. Is thus essential for accurate translation. This Shewanella denitrificans (strain OS217 / ATCC BAA-1090 / DSM 15013) protein is Large ribosomal subunit protein bL12.